Consider the following 164-residue polypeptide: OV-17 antigen (164 aa).

Positions 1–16 are cleaved as a signal peptide; sequence MKFVILLTIGLLVVAA. The interval 24-43 is disordered; that stretch reads QQQQQQQQQRDEREIPPFLE.

It belongs to the SXP/RAL-2 family. In terms of tissue distribution, high levels in the hypodermal layer of the adult female.

This Onchocerca volvulus protein is OV-17 antigen (OV17).